Reading from the N-terminus, the 106-residue chain is Ribonuclease P protein component 4 (106 aa).

Zn(2+) is bound by residues Cys-62, Cys-65, Cys-88, and Cys-91.

Belongs to the eukaryotic/archaeal RNase P protein component 4 family. As to quaternary structure, consists of a catalytic RNA component and at least 4-5 protein subunits. Zn(2+) serves as cofactor.

The protein resides in the cytoplasm. It catalyses the reaction Endonucleolytic cleavage of RNA, removing 5'-extranucleotides from tRNA precursor.. Its function is as follows. Part of ribonuclease P, a protein complex that generates mature tRNA molecules by cleaving their 5'-ends. The chain is Ribonuclease P protein component 4 from Methanocorpusculum labreanum (strain ATCC 43576 / DSM 4855 / Z).